The sequence spans 104 residues: ATP-dependent Clp protease adapter protein ClpS (104 aa).

This sequence belongs to the ClpS family. As to quaternary structure, binds to the N-terminal domain of the chaperone ClpA.

In terms of biological role, involved in the modulation of the specificity of the ClpAP-mediated ATP-dependent protein degradation. This chain is ATP-dependent Clp protease adapter protein ClpS, found in Burkholderia ambifaria (strain MC40-6).